A 309-amino-acid polypeptide reads, in one-letter code: Cytochrome c biogenesis protein CcsA (309 aa).

Helical transmembrane passes span 18 to 38 (LGIL…GAVF), 43 to 63 (FFIV…QLLF), 67 to 87 (ISGH…AWGI), 102 to 122 (IIPS…CFVL), 148 to 168 (VMLS…VLFI), 216 to 236 (SILI…VWAN), 250 to 267 (TWAF…HMRI), and 279 to 299 (LATS…FLGI).

Belongs to the CcmF/CycK/Ccl1/NrfE/CcsA family. May interact with ccs1.

It localises to the cellular thylakoid membrane. Its function is as follows. Required during biogenesis of c-type cytochromes (cytochrome c6 and cytochrome f) at the step of heme attachment. The sequence is that of Cytochrome c biogenesis protein CcsA from Prochlorococcus marinus (strain MIT 9312).